The following is a 506-amino-acid chain: 2,3-bisphosphoglycerate-independent phosphoglycerate mutase (506 aa).

Positions 13 and 63 each coordinate Mn(2+). S63 serves as the catalytic Phosphoserine intermediate. Substrate contacts are provided by residues H124, 153 to 154, R183, R189, 254 to 257, and K330; these read RD and RADR. Mn(2+)-binding residues include D396, H400, D437, H438, and H456.

The protein belongs to the BPG-independent phosphoglycerate mutase family. In terms of assembly, monomer. The cofactor is Mn(2+).

It carries out the reaction (2R)-2-phosphoglycerate = (2R)-3-phosphoglycerate. Its pathway is carbohydrate degradation; glycolysis; pyruvate from D-glyceraldehyde 3-phosphate: step 3/5. Catalyzes the interconversion of 2-phosphoglycerate and 3-phosphoglycerate. In Cereibacter sphaeroides (strain ATCC 17023 / DSM 158 / JCM 6121 / CCUG 31486 / LMG 2827 / NBRC 12203 / NCIMB 8253 / ATH 2.4.1.) (Rhodobacter sphaeroides), this protein is 2,3-bisphosphoglycerate-independent phosphoglycerate mutase.